The sequence spans 537 residues: Lariat debranching enzyme (537 aa).

The a divalent metal cation site is built by C8, H10, D39, and N84. Residues 124 to 154 are lariat recognition loop; that stretch reads SGIYKGHDFLRGHHEFPPYTESTCRSVYHVR. Residues H174, H226, and H228 each contribute to the a divalent metal cation site. 2 disordered regions span residues 242-272 and 473-537; these read KAPT…SRLP and TAAE…EDDD. Low complexity predominate over residues 251-260; it reads SSSSSSSSSS.

Belongs to the lariat debranching enzyme family. Fe(2+) serves as cofactor. Requires Zn(2+) as cofactor. Mn(2+) is required as a cofactor.

It is found in the nucleus. Its activity is regulated as follows. Active in presence of diverse metals including Fe(2+), Zn(2+), Mn(2+). Binds two metal cations in two adjacent alpha and beta metal-binding pockets. Functionally, cleaves the 2'-5' phosphodiester linkage at the branch point of lariat intron pre-mRNAs after splicing and converts them into linear molecules that are subsequently degraded. It thereby facilitates ribonucleotide turnover. This chain is Lariat debranching enzyme (DBR1), found in Drosophila pseudoobscura pseudoobscura (Fruit fly).